Consider the following 348-residue polypeptide: VIP36-like protein (348 aa).

An N-terminal signal peptide occupies residues 1–38; that stretch reads MAVALGPSGWWQRWRRRLSAREVSRMLLLLLLLGSGQG. Over 39–313 the chain is Lumenal; that stretch reads PRQVGAGQTF…APLPPLSGLA (275 aa). The L-type lectin-like domain maps to 49–274; that stretch reads EYLKREHSLS…DVISLKLFEL (226 aa). Residues serine 93 and aspartate 128 each contribute to the a carbohydrate site. The Ca(2+) site is built by aspartate 159, tyrosine 161, and asparagine 163. Positions 161 and 163 each coordinate a carbohydrate. N-linked (GlcNAc...) asparagine glycosylation is present at asparagine 181. Histidine 188 serves as a coordination point for a carbohydrate. Aspartate 191 provides a ligand contact to Ca(2+). Cysteine 200 and cysteine 237 form a disulfide bridge. 258–260 serves as a coordination point for a carbohydrate; it reads GDL. The chain crosses the membrane as a helical span at residues 314-334; the sequence is LFLIVFFSLVFSVFAIVIGII. Residues 335–348 are Cytoplasmic-facing; it reads LYNKWQDQSRKRFY. An Endoplasmic reticulum retention signal motif is present at residues 344 to 346; it reads RKR.

It is found in the endoplasmic reticulum membrane. It localises to the golgi apparatus membrane. In terms of biological role, may be involved in the regulation of export from the endoplasmic reticulum of a subset of glycoproteins. May function as a regulator of ERGIC-53. The polypeptide is VIP36-like protein (LMAN2L) (Bos taurus (Bovine)).